We begin with the raw amino-acid sequence, 200 residues long: Protein GrpE (200 aa).

Positions 1-25 (MMSKQNKKDWKKFKDEHKEEHKVEN) are enriched in basic and acidic residues. The tract at residues 1–52 (MMSKQNKKDWKKFKDEHKEEHKVENEILEEETDEESQHQEPALGHPSYTALE) is disordered.

The protein belongs to the GrpE family. As to quaternary structure, homodimer.

The protein resides in the cytoplasm. In terms of biological role, participates actively in the response to hyperosmotic and heat shock by preventing the aggregation of stress-denatured proteins, in association with DnaK and GrpE. It is the nucleotide exchange factor for DnaK and may function as a thermosensor. Unfolded proteins bind initially to DnaJ; upon interaction with the DnaJ-bound protein, DnaK hydrolyzes its bound ATP, resulting in the formation of a stable complex. GrpE releases ADP from DnaK; ATP binding to DnaK triggers the release of the substrate protein, thus completing the reaction cycle. Several rounds of ATP-dependent interactions between DnaJ, DnaK and GrpE are required for fully efficient folding. This is Protein GrpE from Legionella pneumophila subsp. pneumophila (strain Philadelphia 1 / ATCC 33152 / DSM 7513).